The primary structure comprises 352 residues: Protein RecA (352 aa).

65-72 is an ATP binding site; that stretch reads GPESSGKT.

Belongs to the RecA family.

The protein resides in the cytoplasm. Can catalyze the hydrolysis of ATP in the presence of single-stranded DNA, the ATP-dependent uptake of single-stranded DNA by duplex DNA, and the ATP-dependent hybridization of homologous single-stranded DNAs. It interacts with LexA causing its activation and leading to its autocatalytic cleavage. This chain is Protein RecA, found in Pseudomonas fluorescens (strain Pf0-1).